The sequence spans 204 residues: Holliday junction branch migration complex subunit RuvA (204 aa).

The interval 1-64 is domain I; that stretch reads MIGRLRGILL…EDAQLLYGFN (64 aa). Positions 65-143 are domain II; it reads TVKERALFRE…GWSAGDLFTP (79 aa). The flexible linker stretch occupies residues 144–155; that stretch reads FTDAAPVDSGST. Residues 156 to 204 form a domain III region; it reads SSNSAEEEAVSALLALGYKPVQASKVVSQIAKPDMTSEQLIREALKSMV.

Belongs to the RuvA family. In terms of assembly, homotetramer. Forms an RuvA(8)-RuvB(12)-Holliday junction (HJ) complex. HJ DNA is sandwiched between 2 RuvA tetramers; dsDNA enters through RuvA and exits via RuvB. An RuvB hexamer assembles on each DNA strand where it exits the tetramer. Each RuvB hexamer is contacted by two RuvA subunits (via domain III) on 2 adjacent RuvB subunits; this complex drives branch migration. In the full resolvosome a probable DNA-RuvA(4)-RuvB(12)-RuvC(2) complex forms which resolves the HJ.

Its subcellular location is the cytoplasm. Its function is as follows. The RuvA-RuvB-RuvC complex processes Holliday junction (HJ) DNA during genetic recombination and DNA repair, while the RuvA-RuvB complex plays an important role in the rescue of blocked DNA replication forks via replication fork reversal (RFR). RuvA specifically binds to HJ cruciform DNA, conferring on it an open structure. The RuvB hexamer acts as an ATP-dependent pump, pulling dsDNA into and through the RuvAB complex. HJ branch migration allows RuvC to scan DNA until it finds its consensus sequence, where it cleaves and resolves the cruciform DNA. The sequence is that of Holliday junction branch migration complex subunit RuvA from Vibrio vulnificus (strain CMCP6).